Consider the following 490-residue polypeptide: UDP-glucosyl transferase 73M2 (490 aa).

His20 acts as the Proton acceptor in catalysis. Asp124 acts as the Charge relay in catalysis. UDP contacts are provided by Ser297, Trp353, Ala354, His371, Asn375, Ser376, Glu379, and Tyr393.

The protein belongs to the UDP-glycosyltransferase family. Mainly expressed in flowers, flower buds and young leaves, and, to a lesser extent, in old leaves, stems and roots.

The protein operates within secondary metabolite biosynthesis; terpenoid biosynthesis. In terms of biological role, component of the oleanane-type triterpene saponins (e.g. saponarioside A and saponarioside B) biosynthetic pathway, leading to the production of natural products with detergent properties used as traditional sources of soap. A glycosyltransferase that mediates the conversion of QA-triFRX to QA-triFRXX via the elongation of the C-28 sugar chain with a D-xylose. This Saponaria officinalis (Common soapwort) protein is UDP-glucosyl transferase 73M2.